A 463-amino-acid polypeptide reads, in one-letter code: Glutamate--tRNA ligase 2 (463 aa).

The 'HIGH' region signature appears at 10–20 (PSPTGFLHIGS). A 'KMSKS' region motif is present at residues 239 to 243 (KLSKR). Lys242 contacts ATP.

Belongs to the class-I aminoacyl-tRNA synthetase family. Glutamate--tRNA ligase type 1 subfamily. In terms of assembly, monomer.

The protein resides in the cytoplasm. The catalysed reaction is tRNA(Glu) + L-glutamate + ATP = L-glutamyl-tRNA(Glu) + AMP + diphosphate. Its function is as follows. Catalyzes the attachment of glutamate to tRNA(Glu) in a two-step reaction: glutamate is first activated by ATP to form Glu-AMP and then transferred to the acceptor end of tRNA(Glu). This is Glutamate--tRNA ligase 2 from Rickettsia akari (strain Hartford).